The following is an 84-amino-acid chain: Beta-cardiotoxin CTX14 (84 aa).

Residues 1-21 form the signal peptide; sequence MKTLLLTLVVVTIVCLDLGYT. Disulfide bonds link Cys24–Cys43, Cys36–Cys61, Cys65–Cys76, and Cys77–Cys82.

The protein belongs to the three-finger toxin family. Short-chain subfamily. Aminergic toxin sub-subfamily. As to expression, expressed by the venom gland.

Its subcellular location is the secreted. Functionally, acts as a beta-blocker by binding to beta-1 and beta-2 adrenergic receptors (ADRB1 and ADRB2). It dose-dependently decreases the heart rate (bradycardia), whereas conventional cardiotoxins increases it. At 100 mg/kg, intraperitoneal injection into mice provokes labored breathing, impaired locomotion, lack of response to external stimuli, and death (after 30 minutes). The protein is Beta-cardiotoxin CTX14 of Ophiophagus hannah (King cobra).